A 236-amino-acid chain; its full sequence is MQHNTNVDPQEIAKFERMAETWWDLNGEFKPLHLLNPLRLNYIDQTTGGIFGKKVLDVGCGGGILSESMARIGAEVDGLDMGEEPLEVARLHALETGVNITYVKNTAEAHSQDHQGYYDVVTCMEMLEHVPNPQSVIKACCDMVKPGGFVFFSTINRNLRSYVETILGAEYLLKMLPVGTHDHNKFIKPSELIELVDNTDLICKDAVGITYNPLTGIFKYTPRVDVNYMIATQKVD.

Arg39, Gly59, Asp80, and Met124 together coordinate S-adenosyl-L-methionine.

This sequence belongs to the methyltransferase superfamily. UbiG/COQ3 family.

It catalyses the reaction a 3-demethylubiquinol + S-adenosyl-L-methionine = a ubiquinol + S-adenosyl-L-homocysteine + H(+). It carries out the reaction a 3-(all-trans-polyprenyl)benzene-1,2-diol + S-adenosyl-L-methionine = a 2-methoxy-6-(all-trans-polyprenyl)phenol + S-adenosyl-L-homocysteine + H(+). It participates in cofactor biosynthesis; ubiquinone biosynthesis. O-methyltransferase that catalyzes the 2 O-methylation steps in the ubiquinone biosynthetic pathway. The protein is Ubiquinone biosynthesis O-methyltransferase of Shewanella sp. (strain W3-18-1).